A 155-amino-acid polypeptide reads, in one-letter code: Ribosome maturation factor RimP (155 aa).

Belongs to the RimP family.

Its subcellular location is the cytoplasm. Functionally, required for maturation of 30S ribosomal subunits. The sequence is that of Ribosome maturation factor RimP from Listeria innocua serovar 6a (strain ATCC BAA-680 / CLIP 11262).